The sequence spans 442 residues: Cytokine receptor-like factor 3 (442 aa).

Residues 10–46 (EVLLQEARENVEAAQSYRRELGQRLQGLREAQRQIKE) are a coiled coil. A Fibronectin type-III domain is found at 181–274 (PPVQIEELIE…PQTGHSTLVP (94 aa)).

The protein belongs to the cytokine receptor-like factor 3 family.

The protein resides in the cytoplasm. In terms of biological role, may play a role in the negative regulation of cell cycle progression. This Mus musculus (Mouse) protein is Cytokine receptor-like factor 3 (Crlf3).